The chain runs to 212 residues: Uridine kinase (212 aa).

Gly-13–Thr-20 provides a ligand contact to ATP.

Belongs to the uridine kinase family.

It is found in the cytoplasm. The enzyme catalyses uridine + ATP = UMP + ADP + H(+). The catalysed reaction is cytidine + ATP = CMP + ADP + H(+). Its pathway is pyrimidine metabolism; CTP biosynthesis via salvage pathway; CTP from cytidine: step 1/3. It participates in pyrimidine metabolism; UMP biosynthesis via salvage pathway; UMP from uridine: step 1/1. This chain is Uridine kinase, found in Bacillus thuringiensis (strain Al Hakam).